A 166-amino-acid chain; its full sequence is Phosphopantetheine adenylyltransferase (166 aa).

A substrate-binding site is contributed by serine 11. ATP contacts are provided by residues serine 11 to phenylalanine 12 and histidine 19. Substrate is bound by residues lysine 43, alanine 76, and arginine 90. ATP contacts are provided by residues glycine 91–arginine 93, glutamate 101, and methionine 126–serine 132.

The protein belongs to the bacterial CoaD family. Homohexamer. The cofactor is Mg(2+).

Its subcellular location is the cytoplasm. It carries out the reaction (R)-4'-phosphopantetheine + ATP + H(+) = 3'-dephospho-CoA + diphosphate. It functions in the pathway cofactor biosynthesis; coenzyme A biosynthesis; CoA from (R)-pantothenate: step 4/5. In terms of biological role, reversibly transfers an adenylyl group from ATP to 4'-phosphopantetheine, yielding dephospho-CoA (dPCoA) and pyrophosphate. This Streptococcus uberis (strain ATCC BAA-854 / 0140J) protein is Phosphopantetheine adenylyltransferase.